The sequence spans 116 residues: U16-barytoxin-Tl1b (116 aa).

A signal peptide spans 1–20 (MKTIIVFLSLLVLATKFGDA). A propeptide spanning residues 21 to 74 (KEGVNQKQKKEVTQNEFREEYLNEMAAMSLVQQLEAIERALFENEAGRNSRQKR) is cleaved from the precursor. Disulfide bonds link Cys-75–Cys-90, Cys-82–Cys-95, and Cys-89–Cys-110.

It belongs to the neurotoxin 14 (magi-1) family. 06 (ICK-Trit) subfamily. As to expression, expressed by the venom gland.

Its subcellular location is the secreted. Ion channel inhibitor. The protein is U16-barytoxin-Tl1b of Trittame loki (Brush-footed trapdoor spider).